The following is a 793-amino-acid chain: ABC transporter G family member 1 (793 aa).

Residues 1 to 20 (MDSNNNNNNENEAFSGASES) are compositionally biased toward low complexity. The interval 1–96 (MDSNNNNNNE…NNNQNNNIIN (96 aa)) is disordered. Residues 21 to 37 (SEFRKIVEENENEREFE) show a composition bias toward basic and acidic residues. Residues 59 to 68 (ETINPNISLD) are compositionally biased toward polar residues. A coiled-coil region spans residues 67-102 (LDNNNNNNQNNQNNQNNNNNNNNQNNNIINNLNKKN). Residues 69-96 (NNNNNNQNNQNNQNNNNNNNNQNNNIIN) show a composition bias toward low complexity. The ABC transporter domain maps to 123-364 (VQITEKGKKK…FNANGYHCSE (242 aa)). An ATP-binding site is contributed by 156–163 (GPSGAGKT). The segment covering 382–398 (DQADSDDDDYNDEEEEI) has biased composition (acidic residues). The tract at residues 382-457 (DQADSDDDDY…QSTDGRARRR (76 aa)) is disordered. Residues 399 to 413 (GGGGGGSGGGAGGIE) are compositionally biased toward gly residues. The segment covering 421 to 437 (PTMNGSAVDNIKNNELK) has biased composition (polar residues). Residues 438-448 (QQQQQQQQQQQ) are compositionally biased toward low complexity. Positions 527–785 (MAFKVNLIQA…VLTFLVLKLK (259 aa)) constitute an ABC transmembrane type-2 domain. Helical transmembrane passes span 533–553 (LIQA…LGLG), 563–583 (VVAF…IHVF), 610–630 (FMDA…VYWM), 647–667 (FVLM…LISS), 674–694 (VGTA…GFFI), 701–721 (GWLV…AAVI), and 764–784 (VWIL…VLKL).

The protein belongs to the ABC transporter superfamily. ABCG family.

It localises to the membrane. The polypeptide is ABC transporter G family member 1 (abcG1) (Dictyostelium discoideum (Social amoeba)).